Here is a 482-residue protein sequence, read N- to C-terminus: UDP-sulfoquinovose synthase, chloroplastic (482 aa).

Residues M1–R61 constitute a chloroplast transit peptide. NAD(+) is bound by residues Y100–C101, D120–R124, D163–I164, R189, and N207. Residue R189 coordinates substrate. T233 and Y270 together coordinate substrate. The active site involves T233. Positions 270 and 274 each coordinate NAD(+). The active-site Proton acceptor is Y270. The active site involves K274. Q297 contacts substrate. NAD(+) is bound at residue V300. Substrate-binding positions include A327–R330, T342–Y344, and R415–E417.

It belongs to the NAD(P)-dependent epimerase/dehydratase family. In terms of assembly, homodimer. Interacts with FdGOGAT (via FMN-binding domain). The cofactor is NAD(+). In terms of processing, the N-terminus is blocked.

It localises to the plastid. The protein localises to the chloroplast stroma. It catalyses the reaction sulfite + UDP-alpha-D-glucose + H(+) = UDP-alpha-D-6-sulfoquinovose + H2O. Its function is as follows. Involved in the biosynthesis of sulfolipids found in thylakoid membranes. Converts UDP-glucose and sulfite to the sulfolipid head group precursor UDP-sulfoquinovose. The sulfite is delivered to the reaction center by the FMN-binding domain of FdGOGAT. The protein is UDP-sulfoquinovose synthase, chloroplastic (SQD1) of Spinacia oleracea (Spinach).